Here is a 904-residue protein sequence, read N- to C-terminus: DNA polymerase I (904 aa).

The 5'-3' exonuclease domain maps to 186-279; sequence TPRQYPDFAA…DTLRLQPWDR (94 aa). Positions 317 to 493 constitute a 3'-5' exonuclease domain; sequence RGGALAPGTV…LADALDAELA (177 aa).

Belongs to the DNA polymerase type-A family. As to quaternary structure, single-chain monomer with multiple functions.

The enzyme catalyses DNA(n) + a 2'-deoxyribonucleoside 5'-triphosphate = DNA(n+1) + diphosphate. In terms of biological role, in addition to polymerase activity, this DNA polymerase exhibits 3'-5' and 5'-3' exonuclease activity. The chain is DNA polymerase I (polA) from Mycobacterium bovis (strain ATCC BAA-935 / AF2122/97).